The following is a 1147-amino-acid chain: Myosin heavy chain IB (1147 aa).

The region spanning 9–677 is the Myosin motor domain; the sequence is RGVDDLVLMP…TLFHLEECLD (669 aa). Position 103–110 (103–110) interacts with ATP; that stretch reads GESGAGKT. At S315 the chain carries Phosphoserine. The tract at residues 551 to 573 is actin-binding; the sequence is CDALMEALSRCSPHYIRCIKPND. Positions 715 to 900 constitute a TH1 domain; the sequence is KERQRHSVNR…RANIQIGIAT (186 aa). 2 disordered regions span residues 901–954 and 969–1089; these read GLPK…YSQP and AAVP…APAA. Gly residues-rich tracts occupy residues 916 to 951 and 975 to 1079; these read SGGGGGYGGGRGGGGGGRGAAGGGRGGFGGGGGGGY and GRGG…GAGR. Residues 1090–1147 enclose the SH3 domain; it reads PAKPQVKALYDYDAQTGDELTFKEGDTIIVHQKDPAGWWEGELNGKRGWVPANYVQDI.

It belongs to the TRAFAC class myosin-kinesin ATPase superfamily. Myosin family. Myosin I heavy chain is single-headed. Dimer of a heavy and a light chain. Inability to self-assemble into filaments.

In terms of biological role, myosin is a protein that binds to F-actin and has ATPase activity that is activated by F-actin. The chain is Myosin heavy chain IB (MIB) from Acanthamoeba castellanii (Amoeba).